A 215-amino-acid polypeptide reads, in one-letter code: ATP-dependent Clp protease proteolytic subunit (215 aa).

Ser-115 functions as the Nucleophile in the catalytic mechanism. His-140 is an active-site residue.

The protein belongs to the peptidase S14 family. As to quaternary structure, fourteen ClpP subunits assemble into 2 heptameric rings which stack back to back to give a disk-like structure with a central cavity, resembling the structure of eukaryotic proteasomes.

It is found in the cytoplasm. The catalysed reaction is Hydrolysis of proteins to small peptides in the presence of ATP and magnesium. alpha-casein is the usual test substrate. In the absence of ATP, only oligopeptides shorter than five residues are hydrolyzed (such as succinyl-Leu-Tyr-|-NHMec, and Leu-Tyr-Leu-|-Tyr-Trp, in which cleavage of the -Tyr-|-Leu- and -Tyr-|-Trp bonds also occurs).. Functionally, cleaves peptides in various proteins in a process that requires ATP hydrolysis. Has a chymotrypsin-like activity. Plays a major role in the degradation of misfolded proteins. The chain is ATP-dependent Clp protease proteolytic subunit from Anaplasma marginale (strain Florida).